Reading from the N-terminus, the 580-residue chain is Proline--tRNA ligase (580 aa).

Belongs to the class-II aminoacyl-tRNA synthetase family. ProS type 1 subfamily. In terms of assembly, homodimer.

The protein resides in the cytoplasm. It carries out the reaction tRNA(Pro) + L-proline + ATP = L-prolyl-tRNA(Pro) + AMP + diphosphate. Functionally, catalyzes the attachment of proline to tRNA(Pro) in a two-step reaction: proline is first activated by ATP to form Pro-AMP and then transferred to the acceptor end of tRNA(Pro). As ProRS can inadvertently accommodate and process non-cognate amino acids such as alanine and cysteine, to avoid such errors it has two additional distinct editing activities against alanine. One activity is designated as 'pretransfer' editing and involves the tRNA(Pro)-independent hydrolysis of activated Ala-AMP. The other activity is designated 'posttransfer' editing and involves deacylation of mischarged Ala-tRNA(Pro). The misacylated Cys-tRNA(Pro) is not edited by ProRS. This Mycobacteroides abscessus (strain ATCC 19977 / DSM 44196 / CCUG 20993 / CIP 104536 / JCM 13569 / NCTC 13031 / TMC 1543 / L948) (Mycobacterium abscessus) protein is Proline--tRNA ligase.